Here is a 228-residue protein sequence, read N- to C-terminus: Vesicle transport protein SEC20 (228 aa).

The Cytoplasmic portion of the chain corresponds to 1-199 (MAAPQDVHVR…LITKYNRREL (199 aa)). Residues 37–90 (LSELTELNTKVKEKFQQLKQRIQELEQSAREQDKESEKQLLLQEVENHKKQMLS) are a coiled coil. Residues 200–220 (TDKLLIFLALALFLATVLYIV) form a helical; Anchor for type IV membrane protein membrane-spanning segment. At 221–228 (KKRLFPFL) the chain is on the lumenal side.

It belongs to the SEC20 family. In terms of assembly, component of a SNARE complex consisting of STX18, USE1L, BNIP1/SEC20L and SEC22B. Interacts directly with STX18, RINT1/TIP20L and NAPA. Interacts with ZW10 through RINT1. Interacts with BCL2. Interacts with RNF186. Interacts with RNF185. Interacts with SQSTM1; increased by 'Lys-63'-linked polyubiquitination of BNIP1. Post-translationally, polyubiquitinated. 'Lys-63'-linked polyubiquitination by RNF185 increases the interaction with the autophagy receptor SQSTM1. Undergoes 'Lys-29'- and 'Lys-63'-linked polyubiquitination by RNF186 that may regulate BNIP1 localization to the mitochondrion.

It is found in the endoplasmic reticulum membrane. The protein resides in the mitochondrion membrane. Its function is as follows. As part of a SNARE complex may be involved in endoplasmic reticulum membranes fusion and be required for the maintenance of endoplasmic reticulum organization. Also plays a role in apoptosis. It is for instance required for endoplasmic reticulum stress-induced apoptosis. As a substrate of RNF185 interacting with SQSTM1, might also be involved in mitochondrial autophagy. In Mus musculus (Mouse), this protein is Vesicle transport protein SEC20.